Consider the following 166-residue polypeptide: MIYIDNRQNKIKVNEEFENKIKEIIDYALKEEKVNIDYEISVVFIDNNSIKEINKDYRNIDKATDVLSFPMLDYEEGKVFKDVYLNYEFDESDLDEGNLILGDIALSLEKAEEQSKEFGHSFLRETCYLTIHSVLHLLGYDHMEEEEKAIMRQREEEILKSFNLRR.

Positions 132, 136, and 142 each coordinate Zn(2+).

This sequence belongs to the endoribonuclease YbeY family. Zn(2+) is required as a cofactor.

It is found in the cytoplasm. In terms of biological role, single strand-specific metallo-endoribonuclease involved in late-stage 70S ribosome quality control and in maturation of the 3' terminus of the 16S rRNA. The polypeptide is Endoribonuclease YbeY (Clostridium botulinum (strain 657 / Type Ba4)).